The primary structure comprises 89 residues: UPF0213 protein HQ_3675A (89 aa).

A GIY-YIG domain is found at 3-78 (DYHYVYIVEC…KSYTREKKQQ (76 aa)).

Belongs to the UPF0213 family.

The protein is UPF0213 protein HQ_3675A of Haloquadratum walsbyi (strain DSM 16790 / HBSQ001).